The following is a 296-amino-acid chain: 33 kDa chaperonin (296 aa).

Intrachain disulfides connect Cys-233–Cys-235 and Cys-267–Cys-270.

The protein belongs to the HSP33 family. In terms of processing, under oxidizing conditions two disulfide bonds are formed involving the reactive cysteines. Under reducing conditions zinc is bound to the reactive cysteines and the protein is inactive.

It is found in the cytoplasm. Functionally, redox regulated molecular chaperone. Protects both thermally unfolding and oxidatively damaged proteins from irreversible aggregation. Plays an important role in the bacterial defense system toward oxidative stress. This chain is 33 kDa chaperonin, found in Actinobacillus pleuropneumoniae serotype 7 (strain AP76).